A 493-amino-acid chain; its full sequence is Cyclin-dependent kinase-like 2 (493 aa).

Residues 4-287 (YENLGLVGEG…CAELLHHDFF (284 aa)) enclose the Protein kinase domain. ATP is bound by residues 10 to 18 (VGEGSYGMV) and K33. The short motif at 45–51 (KKIAMRE) is the [NKR]KIAxRE element. D126 acts as the Proton acceptor in catalysis. A disordered region spans residues 363–384 (GEKAEKGNRASNASCLHDSRTS).

It belongs to the protein kinase superfamily. CMGC Ser/Thr protein kinase family. CDC2/CDKX subfamily. In terms of tissue distribution, expressed in testis and kidney, and at lower level in brain and lung.

The protein localises to the cytoplasm. It is found in the nucleus. It catalyses the reaction L-seryl-[protein] + ATP = O-phospho-L-seryl-[protein] + ADP + H(+). It carries out the reaction L-threonyl-[protein] + ATP = O-phospho-L-threonyl-[protein] + ADP + H(+). This Homo sapiens (Human) protein is Cyclin-dependent kinase-like 2.